The chain runs to 288 residues: MKYVFIEKHQAEFSIKAMCRVLRVARSGWYTWCQRRTRISTRQQFRQHCDSVVLAAFTRSKQRYCAPRLTDELRAQGYPFNVKTVAASLRCQGLRAKASRKFSPVSYRAHGLPVSENLLEQDFYASGPNQKWAGDITYLRTDEGWLYLAVVIDLWSRAVIGWSMSPRMTAQLACDALQMALWRRKRPWNVIVHTDRGGQYCSADYQAQLKRHNLRGSMSAKGCCYDNACVESFFHSLKVECIHGEHFISREIMRATVFNYIECDYNRWRRHSWCGGLSPEQFENQNLA.

The 164-residue stretch at 124 to 287 (YASGPNQKWA…SPEQFENQNL (164 aa)) folds into the Integrase catalytic domain.

Belongs to the transposase IS3/IS150/IS904 family.

Functionally, involved in the transposition of the insertion sequence IS3. In Escherichia coli (strain K12), this protein is Transposase InsF for insertion sequence IS3fB (insF7).